A 227-amino-acid polypeptide reads, in one-letter code: Phosphoribosylaminoimidazole-succinocarboxamide synthase (227 aa).

It belongs to the SAICAR synthetase family.

It carries out the reaction 5-amino-1-(5-phospho-D-ribosyl)imidazole-4-carboxylate + L-aspartate + ATP = (2S)-2-[5-amino-1-(5-phospho-beta-D-ribosyl)imidazole-4-carboxamido]succinate + ADP + phosphate + 2 H(+). It functions in the pathway purine metabolism; IMP biosynthesis via de novo pathway; 5-amino-1-(5-phospho-D-ribosyl)imidazole-4-carboxamide from 5-amino-1-(5-phospho-D-ribosyl)imidazole-4-carboxylate: step 1/2. The polypeptide is Phosphoribosylaminoimidazole-succinocarboxamide synthase (Clostridium tetani (strain Massachusetts / E88)).